The primary structure comprises 317 residues: tRNA dimethylallyltransferase (317 aa).

16–23 (GPTASGKS) lines the ATP pocket. 18–23 (TASGKS) serves as a coordination point for substrate. Interaction with substrate tRNA stretches follow at residues 41–44 (DSAQ), 165–169 (QRIQR), and 247–252 (RCVGYR).

Belongs to the IPP transferase family. In terms of assembly, monomer. Requires Mg(2+) as cofactor.

It carries out the reaction adenosine(37) in tRNA + dimethylallyl diphosphate = N(6)-dimethylallyladenosine(37) in tRNA + diphosphate. In terms of biological role, catalyzes the transfer of a dimethylallyl group onto the adenine at position 37 in tRNAs that read codons beginning with uridine, leading to the formation of N6-(dimethylallyl)adenosine (i(6)A). This is tRNA dimethylallyltransferase from Nitrosomonas eutropha (strain DSM 101675 / C91 / Nm57).